Consider the following 200-residue polypeptide: dITP/XTP pyrophosphatase (200 aa).

Position 7-12 (7-12 (SNNYHK)) interacts with substrate. Asp-68 (proton acceptor) is an active-site residue. Mg(2+) is bound at residue Asp-68. Substrate contacts are provided by residues Ser-69, 147 to 150 (FGYD), Lys-170, and 175 to 176 (HR).

This sequence belongs to the HAM1 NTPase family. As to quaternary structure, homodimer. The cofactor is Mg(2+).

The catalysed reaction is XTP + H2O = XMP + diphosphate + H(+). The enzyme catalyses dITP + H2O = dIMP + diphosphate + H(+). It carries out the reaction ITP + H2O = IMP + diphosphate + H(+). Pyrophosphatase that catalyzes the hydrolysis of nucleoside triphosphates to their monophosphate derivatives, with a high preference for the non-canonical purine nucleotides XTP (xanthosine triphosphate), dITP (deoxyinosine triphosphate) and ITP. Seems to function as a house-cleaning enzyme that removes non-canonical purine nucleotides from the nucleotide pool, thus preventing their incorporation into DNA/RNA and avoiding chromosomal lesions. The chain is dITP/XTP pyrophosphatase from Acholeplasma laidlawii (strain PG-8A).